We begin with the raw amino-acid sequence, 242 residues long: ESVARGTAPGELHCFPGAGPVRHTLNPMVTGTSVLGVKFDGGVIIAADMLGSYGSLARFRNISRIMKVNENTILGASGDYADYQYLKQVIDQMVIDEELVGDGHNYSPKAIHSWLTRVMYNRRSKMNPLWNTVVIGGFYNGESFLGYVDKLGVAYEAPTIATGFGAYLAQPLLREVTENKATLSKEEARQLVDRCMKVLYYRDARSYNRFEITTVTESGVEVEGPLSSETNWEIAHLISGFE.

Residues 1 to 23 (ESVARGTAPGELHCFPGAGPVRH) constitute a propeptide that is removed on maturation. Residue threonine 24 is the Nucleophile of the active site.

It belongs to the peptidase T1B family. The 26S proteasome consists of a 20S proteasome core and two 19S regulatory subunits. The 20S proteasome core is composed of 28 subunits that are arranged in four stacked rings, resulting in a barrel-shaped structure. The two end rings are each formed by seven alpha subunits, and the two central rings are each formed by seven beta subunits. The catalytic chamber with the active sites is on the inside of the barrel.

It is found in the cytoplasm. The protein localises to the nucleus. Its function is as follows. Non-catalytic component of the proteasome, a multicatalytic proteinase complex which is characterized by its ability to cleave peptides with Arg, Phe, Tyr, Leu, and Glu adjacent to the leaving group at neutral or slightly basic pH. The proteasome has an ATP-dependent proteolytic activity. The sequence is that of Proteasome subunit beta type-4 (psmb4) from Xenopus laevis (African clawed frog).